Reading from the N-terminus, the 387-residue chain is Xylose isomerase (387 aa).

Catalysis depends on residues H54 and D57. Residues E181, E217, H220, D245, D255, D257, and D287 each coordinate Mg(2+).

It belongs to the xylose isomerase family. As to quaternary structure, homotetramer. It depends on Mg(2+) as a cofactor.

Its subcellular location is the cytoplasm. The enzyme catalyses alpha-D-xylose = alpha-D-xylulofuranose. The polypeptide is Xylose isomerase (Streptomyces coelicolor (strain ATCC BAA-471 / A3(2) / M145)).